The primary structure comprises 408 residues: GDSL esterase/lipase At1g54790 (408 aa).

The first 24 residues, 1-24 (MNITKMKLFYVILFFISSLQISNS), serve as a signal peptide directing secretion. Catalysis depends on Ser-38, which acts as the Nucleophile. Asn-273, Asn-289, and Asn-361 each carry an N-linked (GlcNAc...) asparagine glycan. Active-site residues include Asp-370 and His-373.

The protein belongs to the 'GDSL' lipolytic enzyme family.

It localises to the secreted. This Arabidopsis thaliana (Mouse-ear cress) protein is GDSL esterase/lipase At1g54790.